Here is a 114-residue protein sequence, read N- to C-terminus: Iron-sulfur cluster insertion protein ErpA (114 aa).

Iron-sulfur cluster contacts are provided by cysteine 42, cysteine 106, and cysteine 108.

This sequence belongs to the HesB/IscA family. In terms of assembly, homodimer. The cofactor is iron-sulfur cluster.

Required for insertion of 4Fe-4S clusters for at least IspG. The sequence is that of Iron-sulfur cluster insertion protein ErpA from Enterobacter sp. (strain 638).